A 436-amino-acid chain; its full sequence is Protein translocase subunit SecY (436 aa).

8 consecutive transmembrane segments (helical) span residues 17-37 (ILLT…PVPY), 72-92 (FGLL…IQLL), 122-142 (TFFW…EVIF), 146-166 (LQVY…VLWF), 209-229 (FSNI…CIYI), 269-289 (VMPL…FEII), 309-329 (ISYW…IFFF), and 380-400 (IFLI…NLNI).

The protein belongs to the SecY/SEC61-alpha family. As to quaternary structure, component of the plastid Sec protein translocase complex, which is composed of at least SecY and SecE.

Its subcellular location is the plastid. The protein localises to the chloroplast thylakoid membrane. In terms of biological role, the central subunit of the protein translocation channel SecYE. Consists of two halves. These two domains form a lateral gate at the front which open onto the bilayer between TMs 2 and 7, and are clamped together by SecE at the back. The channel is closed by both a pore ring composed of hydrophobic SecY resides and a short helix (helix 2A) on the extracellular side of the membrane which forms a plug. This chain is Protein translocase subunit SecY, found in Vaucheria litorea (Yellow-green alga).